A 480-amino-acid polypeptide reads, in one-letter code: Glutamyl-tRNA(Gln) amidotransferase subunit A (480 aa).

Active-site charge relay system residues include Lys-74 and Ser-149. Residue Ser-173 is the Acyl-ester intermediate of the active site.

Belongs to the amidase family. GatA subfamily. In terms of assembly, heterotrimer of A, B and C subunits.

It carries out the reaction L-glutamyl-tRNA(Gln) + L-glutamine + ATP + H2O = L-glutaminyl-tRNA(Gln) + L-glutamate + ADP + phosphate + H(+). Allows the formation of correctly charged Gln-tRNA(Gln) through the transamidation of misacylated Glu-tRNA(Gln) in organisms which lack glutaminyl-tRNA synthetase. The reaction takes place in the presence of glutamine and ATP through an activated gamma-phospho-Glu-tRNA(Gln). The sequence is that of Glutamyl-tRNA(Gln) amidotransferase subunit A from Ruthia magnifica subsp. Calyptogena magnifica.